Here is a 206-residue protein sequence, read N- to C-terminus: Ribosome maturation factor RimP (206 aa).

It belongs to the RimP family.

It is found in the cytoplasm. In terms of biological role, required for maturation of 30S ribosomal subunits. The sequence is that of Ribosome maturation factor RimP from Paracoccus denitrificans (strain Pd 1222).